A 241-amino-acid chain; its full sequence is Methylosome subunit pICln (241 aa).

The disordered stretch occupies residues 88–112 (EDKEAHMADQEEEESEDDDDDEEPI). The span at 97-112 (QEEEESEDDDDDEEPI) shows a compositional bias: acidic residues.

The protein belongs to the pICln (TC 1.A.47) family. As to quaternary structure, component of the methylosome, a 20S complex containing at least clns1a/picln, prmt5/skb1 and wdr77/mep50; may mediate snrpd1 and snrpd3 methylation. Forms a 6S pICln-Sm complex composed of clns1a/picln, snrpd1, snrpd2, snrpe, snrpf and snrpg; ring-like structure where clns1a/pICln mimics additional Sm proteins and which is unable to assemble into the core snRNP.

The protein resides in the cytoplasm. It is found in the cytosol. Its subcellular location is the nucleus. It localises to the cytoskeleton. Involved in both the assembly of spliceosomal snRNPs and the methylation of Sm proteins. Chaperone that regulates the assembly of spliceosomal U1, U2, U4 and U5 small nuclear ribonucleoproteins (snRNPs), the building blocks of the spliceosome, and thereby plays an important role in the splicing of cellular pre-mRNAs. Most spliceosomal snRNPs contain a common set of Sm proteins SNRPB, SNRPD1, SNRPD2, SNRPD3, SNRPE, SNRPF and SNRPG that assemble in a heptameric protein ring on the Sm site of the small nuclear RNA to form the core snRNP (Sm core). In the cytosol, the Sm proteins SNRPD1, SNRPD2, SNRPE, SNRPF and SNRPG are trapped in an inactive 6S pICln-Sm complex by the chaperone CLNS1A that controls the assembly of the core snRNP. Dissociation by the SMN complex of CLNS1A from the trapped Sm proteins and their transfer to an SMN-Sm complex triggers the assembly of core snRNPs and their transport to the nucleus. The sequence is that of Methylosome subunit pICln (clns1a) from Xenopus laevis (African clawed frog).